Here is an 868-residue protein sequence, read N- to C-terminus: Protein translocase subunit SecA (868 aa).

ATP is bound by residues Gln87, 105–109 (GEGKT), and Asp500. Cys849, Cys851, Cys860, and His861 together coordinate Zn(2+).

Belongs to the SecA family. As to quaternary structure, monomer and homodimer. Part of the essential Sec protein translocation apparatus which comprises SecA, SecYEG and auxiliary proteins SecDF-YajC and YidC. Requires Zn(2+) as cofactor.

Its subcellular location is the cell membrane. It is found in the cytoplasm. The enzyme catalyses ATP + H2O + cellular proteinSide 1 = ADP + phosphate + cellular proteinSide 2.. In terms of biological role, part of the Sec protein translocase complex. Interacts with the SecYEG preprotein conducting channel. Has a central role in coupling the hydrolysis of ATP to the transfer of proteins into and across the cell membrane, serving both as a receptor for the preprotein-SecB complex and as an ATP-driven molecular motor driving the stepwise translocation of polypeptide chains across the membrane. This is Protein translocase subunit SecA from Wolbachia pipientis wMel.